A 123-amino-acid polypeptide reads, in one-letter code: Cliotide T12 (123 aa).

The first 28 residues, Met1–Ala28, serve as a signal peptide directing secretion. A cross-link (cyclopeptide (Gly-Asp)) is located at residues Gly29–Asp58. Intrachain disulfides connect Cys32-Cys48, Cys36-Cys50, and Cys41-Cys55. The propeptide at His59–Asn123 is removed in mature form.

In terms of processing, contains 3 disulfide bonds. This is a cyclic peptide.

Functionally, probably participates in a plant defense mechanism. The protein is Cliotide T12 of Clitoria ternatea (Butterfly pea).